A 207-amino-acid chain; its full sequence is Thiamine-phosphate synthase (207 aa).

4-amino-2-methyl-5-(diphosphooxymethyl)pyrimidine-binding positions include 36–40 and aspartate 68; that span reads QMRIK. Residues aspartate 69 and aspartate 88 each contribute to the Mg(2+) site. Position 106 (serine 106) interacts with 4-amino-2-methyl-5-(diphosphooxymethyl)pyrimidine. 132–134 lines the 2-[(2R,5Z)-2-carboxy-4-methylthiazol-5(2H)-ylidene]ethyl phosphate pocket; the sequence is TKT. Lysine 135 provides a ligand contact to 4-amino-2-methyl-5-(diphosphooxymethyl)pyrimidine. Residues glycine 162 and 182–183 each bind 2-[(2R,5Z)-2-carboxy-4-methylthiazol-5(2H)-ylidene]ethyl phosphate; that span reads IS.

It belongs to the thiamine-phosphate synthase family. Mg(2+) serves as cofactor.

It carries out the reaction 2-[(2R,5Z)-2-carboxy-4-methylthiazol-5(2H)-ylidene]ethyl phosphate + 4-amino-2-methyl-5-(diphosphooxymethyl)pyrimidine + 2 H(+) = thiamine phosphate + CO2 + diphosphate. It catalyses the reaction 2-(2-carboxy-4-methylthiazol-5-yl)ethyl phosphate + 4-amino-2-methyl-5-(diphosphooxymethyl)pyrimidine + 2 H(+) = thiamine phosphate + CO2 + diphosphate. The enzyme catalyses 4-methyl-5-(2-phosphooxyethyl)-thiazole + 4-amino-2-methyl-5-(diphosphooxymethyl)pyrimidine + H(+) = thiamine phosphate + diphosphate. It participates in cofactor biosynthesis; thiamine diphosphate biosynthesis; thiamine phosphate from 4-amino-2-methyl-5-diphosphomethylpyrimidine and 4-methyl-5-(2-phosphoethyl)-thiazole: step 1/1. Its function is as follows. Condenses 4-methyl-5-(beta-hydroxyethyl)thiazole monophosphate (THZ-P) and 2-methyl-4-amino-5-hydroxymethyl pyrimidine pyrophosphate (HMP-PP) to form thiamine monophosphate (TMP). The chain is Thiamine-phosphate synthase from Pyrococcus furiosus (strain ATCC 43587 / DSM 3638 / JCM 8422 / Vc1).